A 534-amino-acid polypeptide reads, in one-letter code: Cytochrome c oxidase subunit 1 (534 aa).

Residues Met-1–Ile-14 are Mitochondrial matrix-facing. The chain crosses the membrane as a helical span at residues Ala-15 to Glu-39. Ca(2+) is bound by residues Glu-39, Ala-42, and Gly-44. The Mitochondrial intermembrane portion of the chain corresponds to Leu-40–Leu-54. A helical transmembrane segment spans residues Phe-55–Ile-88. His-62 is a Fe(II)-heme a binding site. Residues Gly-89 to Arg-97 are Mitochondrial matrix-facing. Residues Ile-98–Leu-118 form a helical membrane-spanning segment. Residues Val-119–Pro-142 lie on the Mitochondrial intermembrane side of the membrane. The helical transmembrane segment at Ser-143 to Asn-171 threads the bilayer. The Mitochondrial matrix portion of the chain corresponds to Met-172 to Pro-183. The chain crosses the membrane as a helical span at residues Leu-184–Asn-215. Topologically, residues Phe-216–Asp-228 are mitochondrial intermembrane. A helical membrane pass occupies residues Pro-229–Ser-263. A Cu cation-binding site is contributed by His-241. Residues His-241–Tyr-245 constitute a cross-link (1'-histidyl-3'-tyrosine (His-Tyr)). Tyr-245 serves as a coordination point for O2. The Mitochondrial matrix segment spans residues Lys-264–Gly-269. The chain crosses the membrane as a helical span at residues Glu-270 to Val-295. Cu cation is bound by residues His-290 and His-291. The Mitochondrial intermembrane segment spans residues Gly-296–Asp-298. The chain crosses the membrane as a helical span at residues Ala-299–Ile-327. Over His-328–Ala-335 the chain is Mitochondrial matrix. A helical transmembrane segment spans residues Thr-336–Leu-358. At Ala-359 to Thr-370 the chain is on the mitochondrial intermembrane side. 2 residues coordinate Mg(2+): His-368 and Asp-369. Residues Tyr-371–Ile-400 form a helical membrane-spanning segment. Heme a3 is bound at residue His-376. His-378 is a Fe(II)-heme a binding site. Residues Leu-401–Asn-406 are Mitochondrial matrix-facing. The chain crosses the membrane as a helical span at residues Glu-407–Leu-431. The Mitochondrial intermembrane segment spans residues Gly-432–Gly-449. A Ca(2+)-binding site is contributed by Pro-441. A helical transmembrane segment spans residues Trp-450–Asp-474. Residues Gln-475–Ser-534 lie on the Mitochondrial matrix side of the membrane.

Belongs to the heme-copper respiratory oxidase family. In terms of assembly, component of the cytochrome c oxidase (complex IV, CIV), a multisubunit enzyme composed of 12 subunits. The complex is composed of a catalytic core of 3 subunits COX1, COX2 and COX3, encoded in the mitochondrial DNA, and 9 supernumerary subunits COX4, COX5A (or COX5B), COX6, COX7, COX8, COX9, COX12, COX13 and COX26, which are encoded in the nuclear genome. The complex exists as a monomer or a dimer and forms supercomplexes (SCs) in the inner mitochondrial membrane with a dimer of ubiquinol-cytochrome c oxidoreductase (cytochrome b-c1 complex, complex III, CIII), resulting in 2 different assemblies (supercomplexes III(2)IV and III(2)IV(2)). Heme serves as cofactor. Requires Cu cation as cofactor. In terms of processing, the N-terminus is blocked.

Its subcellular location is the mitochondrion inner membrane. The catalysed reaction is 4 Fe(II)-[cytochrome c] + O2 + 8 H(+)(in) = 4 Fe(III)-[cytochrome c] + 2 H2O + 4 H(+)(out). The protein operates within energy metabolism; oxidative phosphorylation. Its function is as follows. Component of the cytochrome c oxidase, the last enzyme in the mitochondrial electron transport chain which drives oxidative phosphorylation. The respiratory chain contains 3 multisubunit complexes succinate dehydrogenase (complex II, CII), ubiquinol-cytochrome c oxidoreductase (cytochrome b-c1 complex, complex III, CIII) and cytochrome c oxidase (complex IV, CIV), that cooperate to transfer electrons derived from NADH and succinate to molecular oxygen, creating an electrochemical gradient over the inner membrane that drives transmembrane transport and the ATP synthase. Cytochrome c oxidase is the component of the respiratory chain that catalyzes the reduction of oxygen to water. Electrons originating from reduced cytochrome c in the intermembrane space (IMS) are transferred via the dinuclear copper A center (CU(A)) of COX2 and heme A of COX1 to the active site in COX1, a binuclear center (BNC) formed by heme A3 and copper B (CU(B)). The BNC reduces molecular oxygen to 2 water molecules using 4 electrons from cytochrome c in the IMS and 4 protons from the mitochondrial matrix. COX1 is a catalytic core subunit containing heme A and the active site BNC with heme A3 and the copper atom CU(B). This Saccharomyces cerevisiae (strain ATCC 204508 / S288c) (Baker's yeast) protein is Cytochrome c oxidase subunit 1 (COX1).